A 289-amino-acid polypeptide reads, in one-letter code: Cyclin-dependent kinase inhibitor 4 (289 aa).

Disordered stretches follow at residues 1 to 31 (MGKY…ESSI), 56 to 160 (LQQQ…VSES), and 227 to 248 (SESN…TTPE). Gly residues predominate over residues 13-28 (AGAGAGGGGGGGGGGE). The segment covering 56 to 80 (LQQQQQRCLLQKPSSPSSLPPTSAS) has biased composition (low complexity). The span at 134–144 (CGRNPNPRSNL) shows a compositional bias: polar residues.

The protein belongs to the CDI family. ICK/KRP subfamily. As to quaternary structure, specifically interacts with CDKA-1, but not with CDKB1-1. Interacts with CYCD4-1. Binds to FBL17. Expressed in leaves and flowers and at lower levels in roots.

Its subcellular location is the nucleus. The protein resides in the nucleoplasm. Its function is as follows. Binds and inhibits CYCD2-1/CDKA-1 complex kinase activity. May target specifically CDKA-1. The protein is Cyclin-dependent kinase inhibitor 4 (KRP4) of Arabidopsis thaliana (Mouse-ear cress).